We begin with the raw amino-acid sequence, 236 residues long: Urease accessory protein UreF (236 aa).

Belongs to the UreF family. UreD, UreF and UreG form a complex that acts as a GTP-hydrolysis-dependent molecular chaperone, activating the urease apoprotein by helping to assemble the nickel containing metallocenter of UreC. The UreE protein probably delivers the nickel.

It is found in the cytoplasm. In terms of biological role, required for maturation of urease via the functional incorporation of the urease nickel metallocenter. The polypeptide is Urease accessory protein UreF (Granulibacter bethesdensis (strain ATCC BAA-1260 / CGDNIH1)).